Reading from the N-terminus, the 394-residue chain is DNA replication and repair protein RecF (394 aa).

Residue 30 to 37 (GRNGFGKT) participates in ATP binding.

Belongs to the RecF family.

It is found in the cytoplasm. Its function is as follows. The RecF protein is involved in DNA metabolism; it is required for DNA replication and normal SOS inducibility. RecF binds preferentially to single-stranded, linear DNA. It also seems to bind ATP. The protein is DNA replication and repair protein RecF of Corynebacterium glutamicum (strain R).